A 162-amino-acid polypeptide reads, in one-letter code: Urease subunit beta (162 aa).

Positions 116-162 (WRRSSAAGDAPQELPQVEAAERGRKLDDATDVDTNVGTEEGFEEGRN) are disordered. Basic and acidic residues predominate over residues 134 to 143 (AAERGRKLDD).

It belongs to the urease beta subunit family. As to quaternary structure, heterotrimer of UreA (gamma), UreB (beta) and UreC (alpha) subunits. Three heterotrimers associate to form the active enzyme.

Its subcellular location is the cytoplasm. The enzyme catalyses urea + 2 H2O + H(+) = hydrogencarbonate + 2 NH4(+). It participates in nitrogen metabolism; urea degradation; CO(2) and NH(3) from urea (urease route): step 1/1. This chain is Urease subunit beta, found in Corynebacterium glutamicum (strain ATCC 13032 / DSM 20300 / JCM 1318 / BCRC 11384 / CCUG 27702 / LMG 3730 / NBRC 12168 / NCIMB 10025 / NRRL B-2784 / 534).